Here is a 433-residue protein sequence, read N- to C-terminus: Chitinase-like protein EN03 (433 aa).

The first 16 residues, 1–16 (MKLFIALVGLLALAKA), serve as a signal peptide directing secretion. A GH18 domain is found at 23-433 (SKVLCYYDSR…PILRAAKYRL (411 aa)). A disulfide bridge connects residues Cys27 and Cys54. Residue Asn220 is glycosylated (N-linked (GlcNAc...) asparagine). Residues Cys337 and Cys418 are joined by a disulfide bond.

Belongs to the glycosyl hydrolase 18 family. IDGF subfamily.

Its subcellular location is the secreted. The polypeptide is Chitinase-like protein EN03 (Bombyx mori (Silk moth)).